We begin with the raw amino-acid sequence, 294 residues long: Bifunctional protein FolD 1 (294 aa).

Residues 165–167 (GRS), serine 190, and threonine 231 contribute to the NADP(+) site.

It belongs to the tetrahydrofolate dehydrogenase/cyclohydrolase family. As to quaternary structure, homodimer.

The enzyme catalyses (6R)-5,10-methylene-5,6,7,8-tetrahydrofolate + NADP(+) = (6R)-5,10-methenyltetrahydrofolate + NADPH. The catalysed reaction is (6R)-5,10-methenyltetrahydrofolate + H2O = (6R)-10-formyltetrahydrofolate + H(+). It functions in the pathway one-carbon metabolism; tetrahydrofolate interconversion. Functionally, catalyzes the oxidation of 5,10-methylenetetrahydrofolate to 5,10-methenyltetrahydrofolate and then the hydrolysis of 5,10-methenyltetrahydrofolate to 10-formyltetrahydrofolate. This Paenarthrobacter aurescens (strain TC1) protein is Bifunctional protein FolD 1.